A 326-amino-acid polypeptide reads, in one-letter code: Transcription cofactor vestigial-like protein 3 (326 aa).

The interval 54–82 (SLEVTLPSKQEEEEEEEEDEEEEEKDQPA) is disordered. Lysine 62 participates in a covalent cross-link: Glycyl lysine isopeptide (Lys-Gly) (interchain with G-Cter in SUMO2). The span at 64-78 (EEEEEEEEDEEEEEK) shows a compositional bias: acidic residues. Residue lysine 129 forms a Glycyl lysine isopeptide (Lys-Gly) (interchain with G-Cter in SUMO2) linkage. Residues 184–208 (TADPNSWPGHGLHQTGPAPPPTASE) are disordered.

Belongs to the vestigial family.

Its subcellular location is the nucleus. In terms of biological role, may act as a specific coactivator for the mammalian TEFs. The polypeptide is Transcription cofactor vestigial-like protein 3 (Mus musculus (Mouse)).